Here is a 302-residue protein sequence, read N- to C-terminus: L-threonate dehydrogenase (302 aa).

NAD(+) is bound by residues 7–35 (FHVG…TWGA) and T102. K178 is a catalytic residue. Position 246 (K246) interacts with NAD(+).

It belongs to the HIBADH-related family. L-threonate dehydrogenase subfamily.

The enzyme catalyses L-threonate + NAD(+) = 2-dehydro-L-erythronate + NADH + H(+). In terms of biological role, catalyzes oxidation of L-threonate to 2-oxo-tetronate. Can use either NAD(+) or NADP(+) as cosubstrate, with a preference for NAD(+). The chain is L-threonate dehydrogenase from Escherichia coli (strain K12).